The primary structure comprises 434 residues: Histidinol dehydrogenase (434 aa).

Residues Y130, Q191, and N214 each contribute to the NAD(+) site. 3 residues coordinate substrate: S237, Q259, and H262. Zn(2+) is bound by residues Q259 and H262. Catalysis depends on proton acceptor residues E327 and H328. Positions 328, 361, 415, and 420 each coordinate substrate. D361 is a binding site for Zn(2+). H420 is a Zn(2+) binding site.

The protein belongs to the histidinol dehydrogenase family. The cofactor is Zn(2+).

The enzyme catalyses L-histidinol + 2 NAD(+) + H2O = L-histidine + 2 NADH + 3 H(+). Its pathway is amino-acid biosynthesis; L-histidine biosynthesis; L-histidine from 5-phospho-alpha-D-ribose 1-diphosphate: step 9/9. Catalyzes the sequential NAD-dependent oxidations of L-histidinol to L-histidinaldehyde and then to L-histidine. The polypeptide is Histidinol dehydrogenase (Cereibacter sphaeroides (strain ATCC 17023 / DSM 158 / JCM 6121 / CCUG 31486 / LMG 2827 / NBRC 12203 / NCIMB 8253 / ATH 2.4.1.) (Rhodobacter sphaeroides)).